The sequence spans 428 residues: 3-phosphoshikimate 1-carboxyvinyltransferase (428 aa).

3 residues coordinate 3-phosphoshikimate: K23, S24, and R28. K23 serves as a coordination point for phosphoenolpyruvate. Phosphoenolpyruvate contacts are provided by G97 and R125. S170, S171, Q172, S198, D314, N337, and K341 together coordinate 3-phosphoshikimate. Residue Q172 participates in phosphoenolpyruvate binding. The Proton acceptor role is filled by D314. Residues R345, R387, and K412 each contribute to the phosphoenolpyruvate site.

Belongs to the EPSP synthase family. As to quaternary structure, monomer.

The protein localises to the cytoplasm. It catalyses the reaction 3-phosphoshikimate + phosphoenolpyruvate = 5-O-(1-carboxyvinyl)-3-phosphoshikimate + phosphate. The protein operates within metabolic intermediate biosynthesis; chorismate biosynthesis; chorismate from D-erythrose 4-phosphate and phosphoenolpyruvate: step 6/7. Functionally, catalyzes the transfer of the enolpyruvyl moiety of phosphoenolpyruvate (PEP) to the 5-hydroxyl of shikimate-3-phosphate (S3P) to produce enolpyruvyl shikimate-3-phosphate and inorganic phosphate. This is 3-phosphoshikimate 1-carboxyvinyltransferase from Cronobacter sakazakii (strain ATCC BAA-894) (Enterobacter sakazakii).